The chain runs to 407 residues: Probable NADPH dehydrogenase (407 aa).

FMN-binding residues include threonine 49 and glutamine 124. Residue tyrosine 206 is the Proton donor of the active site. Residues arginine 254 and arginine 357 each contribute to the FMN site.

This sequence belongs to the NADH:flavin oxidoreductase/NADH oxidase family. FMN serves as cofactor.

The catalysed reaction is A + NADPH + H(+) = AH2 + NADP(+). Its function is as follows. Oxidoreductase that binds mammalian estrogens with high affinity. The protein is Probable NADPH dehydrogenase of Candida albicans (strain SC5314 / ATCC MYA-2876) (Yeast).